Reading from the N-terminus, the 216-residue chain is Vacuolar iron transporter homolog 4 (216 aa).

The interval 1–29 (MAATNGDAELTVAEEAKEEEEATDDGGGG) is disordered. The Cytoplasmic portion of the chain corresponds to 1-36 (MAATNGDAELTVAEEAKEEEEATDDGGGGVSSQWLR). Residues 37–57 (AAVLGASDGLVSTAALMLGIG) form a helical membrane-spanning segment. Residues 58-65 (AARPADAR) are Vacuolar-facing. The chain crosses the membrane as a helical span at residues 66–86 (AVLLSGLAGLVAGACSMAIGE). Topologically, residues 87–134 (YVSVHVQLDVELADLERRRRRGGPAPAGLGLHAAAAAVSRPGQAAAAS) are cytoplasmic. The helical transmembrane segment at 135-155 (ALSFAAGAALPLLAAWFVAGA) threads the bilayer. Topologically, residues 156 to 157 (YR) are vacuolar. A helical membrane pass occupies residues 158-178 (VRVVVVVATASLALAAFGAAG). Residues 179–190 (ARLGRAPGGRAG) are Cytoplasmic-facing. The chain crosses the membrane as a helical span at residues 191 to 211 (LRVVVGGLLAMAATYGVMKLF). Residues 212–216 (RTHGV) lie on the Vacuolar side of the membrane.

It belongs to the CCC1 family.

It is found in the vacuole membrane. It carries out the reaction Fe(2+)(in) = Fe(2+)(out). Its function is as follows. Probable vacuolar iron transporter that may be involved in the regulation of iron distribution throughout the plant. The protein is Vacuolar iron transporter homolog 4 of Oryza sativa subsp. japonica (Rice).